A 599-amino-acid chain; its full sequence is Retrotransposon Gag-like protein 5 (599 aa).

Disordered regions lie at residues 77–97 (DPTP…CWPP), 116–139 (DYTN…ELHS), and 377–450 (FPQE…EEDE). Over residues 78-90 (PTPEEEEEEEEEV) the composition is skewed to acidic residues. 2 stretches are compositionally biased toward acidic residues: residues 393–432 (DEME…EDKE) and 439–450 (DSDENKYEEEDE).

The sequence is that of Retrotransposon Gag-like protein 5 from Mus musculus (Mouse).